Here is a 104-residue protein sequence, read N- to C-terminus: L-rhamnose mutarotase (104 aa).

Tyr-18 lines the substrate pocket. His-22 serves as the catalytic Proton donor. Substrate contacts are provided by residues Tyr-41 and 76 to 77 (WW).

It belongs to the rhamnose mutarotase family. In terms of assembly, homodimer.

It localises to the cytoplasm. The enzyme catalyses alpha-L-rhamnose = beta-L-rhamnose. It participates in carbohydrate metabolism; L-rhamnose metabolism. Functionally, involved in the anomeric conversion of L-rhamnose. This Shouchella clausii (strain KSM-K16) (Alkalihalobacillus clausii) protein is L-rhamnose mutarotase.